We begin with the raw amino-acid sequence, 209 residues long: Ribosomal RNA large subunit methyltransferase E (209 aa).

Glycine 63, tryptophan 65, aspartate 83, aspartate 99, and aspartate 124 together coordinate S-adenosyl-L-methionine. Catalysis depends on lysine 164, which acts as the Proton acceptor.

This sequence belongs to the class I-like SAM-binding methyltransferase superfamily. RNA methyltransferase RlmE family.

It localises to the cytoplasm. The catalysed reaction is uridine(2552) in 23S rRNA + S-adenosyl-L-methionine = 2'-O-methyluridine(2552) in 23S rRNA + S-adenosyl-L-homocysteine + H(+). Specifically methylates the uridine in position 2552 of 23S rRNA at the 2'-O position of the ribose in the fully assembled 50S ribosomal subunit. The protein is Ribosomal RNA large subunit methyltransferase E of Pectobacterium atrosepticum (strain SCRI 1043 / ATCC BAA-672) (Erwinia carotovora subsp. atroseptica).